Consider the following 54-residue polypeptide: Synaptosomal-associated protein 25 (54 aa).

The protein belongs to the SNAP-25 family. As to quaternary structure, part of the SNARE core complex containing SNAP25, VAMP2 and STX1A; this complex binds CPLX1. Found in a complex containing SYT1, SV2B and syntaxin-1. Found in a ternary complex with STX1A and VAMP8. Interacts with HSC70 and with SYT9, forming a complex with DNAJC5. The interaction with SYT9 is inhibited in presence of calcium. Isoform 1 and isoform 2 interact with BLOC1S6. Interacts with CENPF. Interacts with EQTN. Interacts with HGS. Interacts with KCNB1 (via N-terminus); reduces the voltage-dependent potassium channel KCNB1 activity in pancreatic beta cells. Interacts with OTOF. Interacts with RIMS1. Interacts with SNAPIN. Interacts with STXBP6. Interacts with TRIM9. Interacts with ZDHHC13 (via ANK repeats). Interacts with ZDHHC17 (via ANK repeats). Associates with the BLOC-1 complex. Interacts with PLCL1 (via C2 domain). Interacts with PRRT2; this interaction may impair the formation of the SNARE complex. Interacts with alpha-synuclein/SNCA. Interacts with PRPH2. Interacts with ROM1. Interacts with STX3. The N-terminus is blocked.

The protein resides in the cytoplasm. It is found in the perinuclear region. It localises to the cell membrane. The protein localises to the synapse. Its subcellular location is the synaptosome. The protein resides in the photoreceptor inner segment. T-SNARE involved in the molecular regulation of neurotransmitter release. May play an important role in the synaptic function of specific neuronal systems. Associates with proteins involved in vesicle docking and membrane fusion. Regulates plasma membrane recycling through its interaction with CENPF. Modulates the gating characteristics of the delayed rectifier voltage-dependent potassium channel KCNB1 in pancreatic beta cells. In Oryctolagus cuniculus (Rabbit), this protein is Synaptosomal-associated protein 25 (SNAP25).